Here is a 481-residue protein sequence, read N- to C-terminus: 3-isopropylmalate dehydratase large subunit (481 aa).

3 residues coordinate [4Fe-4S] cluster: cysteine 357, cysteine 417, and cysteine 420. Residues 429–441 are compositionally biased toward polar residues; that stretch reads SPGQRCASTSNRN. Residues 429–451 are disordered; the sequence is SPGQRCASTSNRNFEGRQGKGGR.

Belongs to the aconitase/IPM isomerase family. LeuC type 1 subfamily. In terms of assembly, heterodimer of LeuC and LeuD. [4Fe-4S] cluster serves as cofactor.

It carries out the reaction (2R,3S)-3-isopropylmalate = (2S)-2-isopropylmalate. Its pathway is amino-acid biosynthesis; L-leucine biosynthesis; L-leucine from 3-methyl-2-oxobutanoate: step 2/4. In terms of biological role, catalyzes the isomerization between 2-isopropylmalate and 3-isopropylmalate, via the formation of 2-isopropylmaleate. The chain is 3-isopropylmalate dehydratase large subunit from Mycobacterium sp. (strain JLS).